The primary structure comprises 256 residues: MPLHKYPVWLWKRLQLREGICSRLPGHYLRSLEEERTPTPVHYRPHGAKFKINPKNGQRERVEDVPIPIYFPPESQRGLWGGEGWILGQIYANNDKLSKRLKKVWKPQLFEREFYSEILDKKFTVTVTMRTLDLIDEAYGLDFYILKTPKEDLCSKFGMDLKRGMLLRLARQDPQLHPEDPERRAAIYDKYKEFAIPEEEAEWVGLTLEEAIEKQRLLEEKDPVPLFKIYVAELIQQLQQQALSEPAVVQKRASGQ.

Residues Met-1 to Lys-55 constitute a mitochondrion transit peptide.

It belongs to the bacterial ribosomal protein bL28 family. In terms of assembly, component of the mitochondrial large ribosomal subunit (mt-LSU). Mature mammalian 55S mitochondrial ribosomes consist of a small (28S) and a large (39S) subunit. The 28S small subunit contains a 12S ribosomal RNA (12S mt-rRNA) and 30 different proteins. The 39S large subunit contains a 16S rRNA (16S mt-rRNA), a copy of mitochondrial valine transfer RNA (mt-tRNA(Val)), which plays an integral structural role, and 52 different proteins. Interacts with OXA1L. In terms of tissue distribution, found in a variety of normal tissues including spleen, testes, thymus, liver, kidney, brain, adrenal, lung and retinal tissue.

The protein localises to the mitochondrion. The sequence is that of Large ribosomal subunit protein bL28m (MRPL28) from Homo sapiens (Human).